Here is a 282-residue protein sequence, read N- to C-terminus: Pantothenate synthetase (282 aa).

30–37 contacts ATP; sequence MGYLHAGH. Residue His-37 is the Proton donor of the active site. Gln-61 lines the (R)-pantoate pocket. Gln-61 contributes to the beta-alanine binding site. Residue 147–150 participates in ATP binding; that stretch reads GKKD. A (R)-pantoate-binding site is contributed by Gln-153. ATP contacts are provided by residues Val-176 and 184–187; that span reads MSSR.

This sequence belongs to the pantothenate synthetase family. As to quaternary structure, homodimer.

It localises to the cytoplasm. It catalyses the reaction (R)-pantoate + beta-alanine + ATP = (R)-pantothenate + AMP + diphosphate + H(+). It functions in the pathway cofactor biosynthesis; (R)-pantothenate biosynthesis; (R)-pantothenate from (R)-pantoate and beta-alanine: step 1/1. Catalyzes the condensation of pantoate with beta-alanine in an ATP-dependent reaction via a pantoyl-adenylate intermediate. The polypeptide is Pantothenate synthetase (Geotalea uraniireducens (strain Rf4) (Geobacter uraniireducens)).